The sequence spans 119 residues: Protein Wnt-4 (119 aa).

Serine 1 carries O-palmitoleoyl serine; by PORCN lipidation. Cystine bridges form between cysteine 69–cysteine 100 and cysteine 85–cysteine 95. The N-linked (GlcNAc...) asparagine glycan is linked to asparagine 86.

The protein belongs to the Wnt family. In terms of processing, palmitoleoylation is required for efficient binding to frizzled receptors. Depalmitoleoylation leads to Wnt signaling pathway inhibition.

The protein localises to the secreted. It localises to the extracellular space. It is found in the extracellular matrix. In terms of biological role, ligand for members of the frizzled family of seven transmembrane receptors. Plays an important role in embryonic development. This chain is Protein Wnt-4 (WNT-4), found in Eptatretus stoutii (Pacific hagfish).